We begin with the raw amino-acid sequence, 146 residues long: MGFTEKQEALVNSSWELFKQNPSYSVLFYTIILKKAPAAKGMFSFLKDSAEVVDSPKLQAHAEKVFGMVHDSAIQLRASGEVVVGDATLGAIHIQKGVVDPHFVVVKEALLETIKEASGEKWSEELSTAWEVAYEGLASAIKKAMN.

Residues 2-146 enclose the Globin domain; it reads GFTEKQEALV…LASAIKKAMN (145 aa). Tyrosine 24 and tyrosine 29 each carry nitrated tyrosine. Serine 44 lines the heme b pocket. Residue serine 44 is modified to Phosphoserine. Residue histidine 61 coordinates O2. Lysine 64, histidine 93, and lysine 96 together coordinate heme b. At tyrosine 134 the chain carries Nitrated tyrosine.

This sequence belongs to the plant globin family. Monomer. Nitrated in effective nodules and particularly in hypoxic conditions; this mechanism may play a protective role in the symbiosis by buffering toxic peroxynitrite NO(2)(-). Nitration level decrease during nodule senescence. Post-translationally, phosphorylation at Ser-44 disrupts the molecular environment of its porphyrin ring oxygen binding pocket, thus leading to a reduced oxygen consumption and to the delivery of oxygen O(2) to symbiosomes. As to expression, root nodules.

Its subcellular location is the cytoplasm. The protein resides in the cytosol. The protein localises to the nucleus. Leghemoglobin that reversibly binds oxygen O(2) through a pentacoordinated heme iron. In root nodules, facilitates the diffusion of oxygen to the bacteroids while preventing the bacterial nitrogenase from being inactivated by buffering dioxygen, nitric oxide and carbon monoxide, and promoting the formation of reactive oxygen species (ROS, e.g. H(2)O(2)). This role is essential for symbiotic nitrogen fixation (SNF). The chain is Leghemoglobin Lb120-1 from Pisum sativum (Garden pea).